Reading from the N-terminus, the 242-residue chain is Sugar fermentation stimulation protein homolog (242 aa).

Belongs to the SfsA family.

This Enterococcus mundtii protein is Sugar fermentation stimulation protein homolog.